The sequence spans 350 residues: Lipoyl synthase, mitochondrial (350 aa).

7 residues coordinate [4Fe-4S] cluster: C83, C88, C94, C113, C117, C120, and S328. The Radical SAM core domain maps to G96–A317.

This sequence belongs to the radical SAM superfamily. Lipoyl synthase family. It depends on [4Fe-4S] cluster as a cofactor.

The protein localises to the mitochondrion. The enzyme catalyses [[Fe-S] cluster scaffold protein carrying a second [4Fe-4S](2+) cluster] + N(6)-octanoyl-L-lysyl-[protein] + 2 oxidized [2Fe-2S]-[ferredoxin] + 2 S-adenosyl-L-methionine + 4 H(+) = [[Fe-S] cluster scaffold protein] + N(6)-[(R)-dihydrolipoyl]-L-lysyl-[protein] + 4 Fe(3+) + 2 hydrogen sulfide + 2 5'-deoxyadenosine + 2 L-methionine + 2 reduced [2Fe-2S]-[ferredoxin]. It participates in protein modification; protein lipoylation via endogenous pathway; protein N(6)-(lipoyl)lysine from octanoyl-[acyl-carrier-protein]: step 2/2. Catalyzes the radical-mediated insertion of two sulfur atoms into the C-6 and C-8 positions of the octanoyl moiety bound to the lipoyl domains of lipoate-dependent enzymes, thereby converting the octanoylated domains into lipoylated derivatives. This is Lipoyl synthase, mitochondrial from Trichoplax adhaerens (Trichoplax reptans).